We begin with the raw amino-acid sequence, 114 residues long: Large ribosomal subunit protein bL19 (114 aa).

It belongs to the bacterial ribosomal protein bL19 family.

In terms of biological role, this protein is located at the 30S-50S ribosomal subunit interface and may play a role in the structure and function of the aminoacyl-tRNA binding site. In Clavibacter sepedonicus (Clavibacter michiganensis subsp. sepedonicus), this protein is Large ribosomal subunit protein bL19.